The primary structure comprises 184 residues: Ribosome-recycling factor (184 aa).

It belongs to the RRF family.

It localises to the cytoplasm. In terms of biological role, responsible for the release of ribosomes from messenger RNA at the termination of protein biosynthesis. May increase the efficiency of translation by recycling ribosomes from one round of translation to another. The chain is Ribosome-recycling factor from Agathobacter rectalis (strain ATCC 33656 / DSM 3377 / JCM 17463 / KCTC 5835 / VPI 0990) (Eubacterium rectale).